The primary structure comprises 341 residues: Tetraacyldisaccharide 4'-kinase (341 aa).

Residue 54–61 coordinates ATP; it reads TVGGAGKT.

This sequence belongs to the LpxK family.

The enzyme catalyses a lipid A disaccharide + ATP = a lipid IVA + ADP + H(+). It functions in the pathway glycolipid biosynthesis; lipid IV(A) biosynthesis; lipid IV(A) from (3R)-3-hydroxytetradecanoyl-[acyl-carrier-protein] and UDP-N-acetyl-alpha-D-glucosamine: step 6/6. In terms of biological role, transfers the gamma-phosphate of ATP to the 4'-position of a tetraacyldisaccharide 1-phosphate intermediate (termed DS-1-P) to form tetraacyldisaccharide 1,4'-bis-phosphate (lipid IVA). The polypeptide is Tetraacyldisaccharide 4'-kinase (Brucella ovis (strain ATCC 25840 / 63/290 / NCTC 10512)).